A 425-amino-acid chain; its full sequence is MNQQWNQYIQIIKQVVKPALGCTEPIAAAYAAAVAKRELGCQTPDTIEVRVSDNLFKNSMGVYVPGTGKIGLKIAASVGALAGDPNAELEVLAKINQDDVTAAQQLIDEERVSVARIDTQELIFCSVTMSAGEDTVSVTISGGHTNIIQITRNGVVTFDAPQQQRVATGSVCEGVDISIKQIYDFALQAPFDDIKFILQAAELNSSLAQEGIDRGYGLEIGRTLKGNIEQGLLGNDLMSRIQMMTSAASDARMGGATLPAMSNFGSGNQGIAATMPVVIAAEAFQSSEEHLARALIMSHLGAIYIKSYYPPLSAFCGNTVTSAAASMALVYLAGGTFEQSCYAIQNVISDSSGMVCDGAKSSCAMKVCTSATTAVRSYLMAMGNHSVKNQGIIGDEVEQTIRNVGSMVRLGMPYTDKSIIDIMSA.

It belongs to the UPF0597 family.

In Vibrio campbellii (strain ATCC BAA-1116), this protein is UPF0597 protein VIBHAR_03081.